We begin with the raw amino-acid sequence, 372 residues long: MNDKKELKLILVAARNQLSSGDIKSLIAYLESNDCEFEISLQISEPTEQPELLELHRLVAIPALIKISPAPKQIFAGSNIFSQFQKWLPRWTQEGLTKNLGINLQPSKIDSIRTQKEFLLEDELLVLRQENETLTKRIESQERLLRMVAHELRTPLTAATLAIQSQKLGQIDISKLQEVIKRRLEEIELLSQDLLEVGTTKWEALFNPQKIDLGNISAEVILELEKFWRLRNIEIDTDIPSDLPSVFADQRRMRQVLLNLIENAIKFSEDSGSIKITMIHKTNQWVEITICDKGAGIPLSEQKRIFLDRVRLPQTSEGTSGFGIGLSVCRRIVQVHGGRIWVVSELSEGSCFHFTVPVWQGQNKEQQYLTKG.

Positions 147-360 (MVAHELRTPL…CFHFTVPVWQ (214 aa)) constitute a Histidine kinase domain. Histidine 150 carries the post-translational modification Phosphohistidine; by autocatalysis.

Homooligomerizes. Interacts with KaiC. Participates in the KaiBC complex, whose core is composed of a KaiC homohexamer and 6 KaiB.

The catalysed reaction is ATP + protein L-histidine = ADP + protein N-phospho-L-histidine.. Functionally, member of the two-component regulatory system SasA/RpaA involved in genome-wide circadian gene expression. One of several clock output pathways. Participates in the Kai clock protein complex, the main circadian regulator in cyanobacteria, via its interaction with KaiC. KaiC enhances the autophosphorylation activity of SasA, which then transfers its phosphate group to RpaA to activate it. In addition to its output function, recruits fold-shifted KaiB (KaiB(fs)) to KaiC to cooperatively form the KaiB(6):KaiC(6) complex (independent of SasA kinase activity). Required for robustness of the circadian rhythm of gene expression and is involved in clock output, also required for adaptation to light/dark cycles. This chain is Adaptive-response sensory kinase SasA, found in Prochlorococcus marinus (strain MIT 9215).